A 281-amino-acid chain; its full sequence is MNTPDQSQLGRVSGYADQYDASLLFPLPRQPKRHEIGVTGTPPFFGADLWTAFELSWLNLRGKPQVALAHITVPCETPNIIESKSFKLYLNSFNNTRFADAAQVQTRIRTDISEAAWRGSDRQATVGVKLVLPEMFDREPVQELDGLLLDRLDVECTHYTPAPELLHANHGEAPVTETLTSHLLKSNCLVTGQPDWGSVRIEYSGAQIDQSGLLRYLVSFRNHNEFHEQCVERIFMDLWTRCRPIKLSVYARYTRRGGLDINPLRTSHPQALPANVRTARQ.

81–83 (IES) is a binding site for substrate. 83–84 (SK) serves as a coordination point for NADPH. Catalysis depends on cysteine 188, which acts as the Thioimide intermediate. The active-site Proton donor is aspartate 195. Substrate is bound at residue 227-228 (HE). 256–257 (RG) contributes to the NADPH binding site.

Belongs to the GTP cyclohydrolase I family. QueF type 2 subfamily. As to quaternary structure, homodimer.

Its subcellular location is the cytoplasm. It carries out the reaction 7-aminomethyl-7-carbaguanine + 2 NADP(+) = 7-cyano-7-deazaguanine + 2 NADPH + 3 H(+). Its pathway is tRNA modification; tRNA-queuosine biosynthesis. Catalyzes the NADPH-dependent reduction of 7-cyano-7-deazaguanine (preQ0) to 7-aminomethyl-7-deazaguanine (preQ1). In Paracidovorax citrulli (strain AAC00-1) (Acidovorax citrulli), this protein is NADPH-dependent 7-cyano-7-deazaguanine reductase.